A 774-amino-acid chain; its full sequence is E3 ubiquitin-protein ligase RFWD3 (774 aa).

Residues serine 46 and serine 63 each carry the phosphoserine; by ATM and ATR modification. Disordered regions lie at residues 95 to 116 (NPRT…PASS), 139 to 225 (PSSS…AEYG), and 257 to 280 (GGKT…ASMD). Residues 106-116 (SDGNHTIPASS) show a composition bias toward polar residues. The span at 150–162 (RTRRRVSASRRAR) shows a compositional bias: basic residues. Over residues 211-221 (SSSSDSDSDSS) the composition is skewed to low complexity. The RING-type; degenerate zinc finger occupies 287–331 (CTICLEQWTNAGDHRLSALRCGHLFGYRCISTWLKGQVRKCPQCN). The stretch at 361–413 (SLLKEQMLRKQAELESAQCRLQLQVLTDKCTRLQRRVQDLQKLTSHQSQNLQQ) forms a coiled coil. WD repeat units lie at residues 495-537 (MHGK…QTYN), 539-577 (GRPV…SHVQ), and 583-628 (KARC…SHWP).

Interacts with MDM2 and p53/TP53. Binds to the RPA complex via direct interaction with RPA2. Interacts with RAD51. In terms of processing, phosphorylated at Ser-46 and Ser-63 upon DNA damage by ATM or ATR. ATM phosphorylation occurs at early times upon DNA damage, while ATR is the major kinase at later times. Phosphorylation by ATM and ATR is required to stabilize p53/TP53. Part of the phosphorylation depends upon RPA2 presence.

The protein localises to the nucleus. The protein resides in the PML body. Its subcellular location is the cytoplasm. The catalysed reaction is S-ubiquitinyl-[E2 ubiquitin-conjugating enzyme]-L-cysteine + [acceptor protein]-L-lysine = [E2 ubiquitin-conjugating enzyme]-L-cysteine + N(6)-ubiquitinyl-[acceptor protein]-L-lysine.. It functions in the pathway protein modification; protein ubiquitination. Functionally, E3 ubiquitin-protein ligase required for the repair of DNA interstrand cross-links (ICL) in response to DNA damage. Plays a key role in RPA-mediated DNA damage signaling and repair. Acts by mediating ubiquitination of the RPA complex (RPA1, RPA2 and RPA3 subunits) and RAD51 at stalled replication forks, leading to remove them from DNA damage sites and promote homologous recombination. Also mediates the ubiquitination of p53/TP53 in the late response to DNA damage, and acts as a positive regulator of p53/TP53 stability, thereby regulating the G1/S DNA damage checkpoint. May act by catalyzing the formation of short polyubiquitin chains on p53/TP53 that are not targeted to the proteasome. In response to ionizing radiation, interacts with MDM2 and enhances p53/TP53 ubiquitination, possibly by restricting MDM2 from extending polyubiquitin chains on ubiquitinated p53/TP53. Required to translesion DNA synthesis across DNA-protein cross-link adducts by catalyzing ubiquitination of proteins on single-stranded DNA (ssDNA). The chain is E3 ubiquitin-protein ligase RFWD3 from Homo sapiens (Human).